The primary structure comprises 412 residues: Isocitrate dehydrogenase [NADP] cytoplasmic (412 aa).

NADP(+)-binding positions include 75–77 (TIT) and Arg-82. Residue Thr-77 coordinates substrate. Substrate contacts are provided by residues 94-100 (SPNGTIR), Arg-109, and Arg-132. Residue Asp-252 participates in Mn(2+) binding. Lys-260 is a binding site for NADP(+). A Mn(2+)-binding site is contributed by Asp-275. NADP(+) contacts are provided by residues 310–315 (GTVTRH) and Asn-328.

The protein belongs to the isocitrate and isopropylmalate dehydrogenases family. In terms of assembly, homodimer. The cofactor is Mg(2+). It depends on Mn(2+) as a cofactor. Post-translationally, the N-terminus is blocked.

Its subcellular location is the cytoplasm. The enzyme catalyses D-threo-isocitrate + NADP(+) = 2-oxoglutarate + CO2 + NADPH. Its activity is regulated as follows. By catabolite repression. Functionally, may function in the production of NADPH for fatty acid and sterol synthesis. The chain is Isocitrate dehydrogenase [NADP] cytoplasmic (IDP2) from Saccharomyces cerevisiae (strain ATCC 204508 / S288c) (Baker's yeast).